We begin with the raw amino-acid sequence, 538 residues long: RNA-binding protein RO60 (538 aa).

A TROVE domain is found at 16 to 369 (VPNSEGCYVW…SFKLVEPTGK (354 aa)). The tract at residues 120-284 (RIPTHLFTFI…DMPLTALLRN (165 aa)) is RNA-binding. A VWFA-like domain region spans residues 361–538 (FKLVEPTGKR…VIRNFTLDLI (178 aa)). A divalent metal cation is bound by residues serine 378, serine 380, and threonine 445.

It belongs to the Ro 60 kDa family.

The protein localises to the cytoplasm. In terms of biological role, RNA-binding protein that binds to misfolded non-coding RNAs, pre-5S rRNA, and several small cytoplasmic RNA molecules known as Y RNAs. May play roles in cilia formation and/or maintenance. The chain is RNA-binding protein RO60 from Xenopus laevis (African clawed frog).